Here is a 349-residue protein sequence, read N- to C-terminus: UDP-N-acetylenolpyruvoylglucosamine reductase (349 aa).

The 173-residue stretch at 25–197 (GIDARARYAA…VSVTFRLPKR (173 aa)) folds into the FAD-binding PCMH-type domain. The active site involves Arg-173. The Proton donor role is filled by Ser-249. Residue Glu-345 is part of the active site.

This sequence belongs to the MurB family. FAD is required as a cofactor.

It localises to the cytoplasm. The catalysed reaction is UDP-N-acetyl-alpha-D-muramate + NADP(+) = UDP-N-acetyl-3-O-(1-carboxyvinyl)-alpha-D-glucosamine + NADPH + H(+). It participates in cell wall biogenesis; peptidoglycan biosynthesis. Cell wall formation. This Burkholderia multivorans (strain ATCC 17616 / 249) protein is UDP-N-acetylenolpyruvoylglucosamine reductase.